The following is a 492-amino-acid chain: KAT8 regulatory NSL complex subunit 2 (492 aa).

Lys78 is covalently cross-linked (Glycyl lysine isopeptide (Lys-Gly) (interchain with G-Cter in SUMO2)). The interval 127-182 (LGSQTPESSRSEASRILDEDSWSDGEQEPITVDQTWRGDPDSEADSIDSDQEDPLK) is disordered. Thr131 is subject to Phosphothreonine. Basic and acidic residues predominate over residues 135-144 (SRSEASRILD). Residues Ser147, Ser149, Ser168, Ser172, and Ser175 each carry the phosphoserine modification. Positions 167–178 (DSEADSIDSDQE) are enriched in acidic residues. The tract at residues 308 to 364 (DVRCSNQSLPMTRHCLTHICQDTNQVLFKCCQGSEEVPCNKPVPVSLSEDPCCPLHF) is required for interaction with other NSL complex members. The tract at residues 455 to 492 (AGDGCRSQGSRNSEKGSAPLSQSGLATANGKPEPTSIS) is disordered.

As to quaternary structure, component of the NSL complex at least composed of KAT8/MOF, KANSL1, KANSL2, KANSL3, MCRS1, PHF20, OGT1/OGT, WDR5 and HCFC1.

Its subcellular location is the nucleus. The protein resides in the mitochondrion. Functionally, non-catalytic component of the NSL histone acetyltransferase complex, a multiprotein complex that mediates histone H4 acetylation at 'Lys-5'- and 'Lys-8' (H4K5ac and H4K8ac) at transcription start sites and promotes transcription initiation. Required for NSL complex stability and for transcription of intraciliary transport genes in both ciliated and non-ciliated cells by regulating histone H4 acetylation at 'Lys-5'- and 'Lys-12' (H4K5ac and H4K12ac). This is necessary for cilium assembly in ciliated cells and for organization of the microtubule cytoskeleton in non-ciliated cells. Required within the NSL complex to maintain nuclear architecture stability by promoting KAT8-mediated acetylation of lamin LMNA. This is KAT8 regulatory NSL complex subunit 2 (KANSL2) from Pongo abelii (Sumatran orangutan).